Here is a 505-residue protein sequence, read N- to C-terminus: ATP synthase subunit alpha (505 aa).

169 to 176 (GDRQTGKT) contacts ATP.

It belongs to the ATPase alpha/beta chains family. F-type ATPases have 2 components, CF(1) - the catalytic core - and CF(0) - the membrane proton channel. CF(1) has five subunits: alpha(3), beta(3), gamma(1), delta(1), epsilon(1). CF(0) has three main subunits: a(1), b(2) and c(9-12). The alpha and beta chains form an alternating ring which encloses part of the gamma chain. CF(1) is attached to CF(0) by a central stalk formed by the gamma and epsilon chains, while a peripheral stalk is formed by the delta and b chains.

The protein resides in the cell membrane. The enzyme catalyses ATP + H2O + 4 H(+)(in) = ADP + phosphate + 5 H(+)(out). Functionally, produces ATP from ADP in the presence of a proton gradient across the membrane. The alpha chain is a regulatory subunit. The sequence is that of ATP synthase subunit alpha from Alkaliphilus oremlandii (strain OhILAs) (Clostridium oremlandii (strain OhILAs)).